A 360-amino-acid polypeptide reads, in one-letter code: MPKKILFTGGGTVGHVTLNLILIPKFIKDGWEVHYIGDKNGIEHTEIEKSGLDVTFHAIATGKLRRYFSWQNLADVFKVALGLLQSLFIVAKLRPQALFSKGGFVSVPPVVAAKLLGKPVFIHESDRSMGLANKIAYKFATTVYTTFEQEDQLSKVKHLGAVTKVFKDANQIPESTQLEAVKEYFSRDLKTLLFIGGSAGAHVFNQFISDHPELKQRYNIINITGDPHLNELSSHLYRVDYVTDLYQPLMAMADLVVTRGGSNTLFELLAMAKLHLIVPLGKEASRGDQLENATYFEKRGYAKQLQEPDLTLHNFDQAMADLFEHQADYEATMLATKEIQSPDFFYDLLRADISSAIKEK.

UDP-N-acetyl-alpha-D-glucosamine is bound by residues S198 and Q289.

It belongs to the glycosyltransferase 28 family. MurG subfamily.

Its subcellular location is the cell membrane. The catalysed reaction is Mur2Ac(oyl-L-Ala-gamma-D-Glu-L-Lys-D-Ala-D-Ala)-di-trans,octa-cis-undecaprenyl diphosphate + UDP-N-acetyl-alpha-D-glucosamine = beta-D-GlcNAc-(1-&gt;4)-Mur2Ac(oyl-L-Ala-gamma-D-Glu-L-Lys-D-Ala-D-Ala)-di-trans,octa-cis-undecaprenyl diphosphate + UDP + H(+). The protein operates within cell wall biogenesis; peptidoglycan biosynthesis. Functionally, cell wall formation. Catalyzes the transfer of a GlcNAc subunit on undecaprenyl-pyrophosphoryl-MurNAc-pentapeptide (lipid intermediate I) to form undecaprenyl-pyrophosphoryl-MurNAc-(pentapeptide)GlcNAc (lipid intermediate II). The chain is UDP-N-acetylglucosamine--N-acetylmuramyl-(pentapeptide) pyrophosphoryl-undecaprenol N-acetylglucosamine transferase from Streptococcus pyogenes serotype M5 (strain Manfredo).